Reading from the N-terminus, the 88-residue chain is Alpha-latrotoxin associated low molecular weight protein (88 aa).

A signal peptide spans 1–18 (MSKLFFVAFLCLIISVFA).

It belongs to the arthropod CHH/MIH/GIH/VIH hormone family. Expressed by the venom gland.

The protein localises to the secreted. In terms of biological role, may increase the toxicity of alpha-latrotoxin and/or other venom components. Is non-toxic to mice and to the cockroach Periplaneta americana. The protein is Alpha-latrotoxin associated low molecular weight protein of Latrodectus hesperus (Western black widow spider).